Consider the following 1420-residue polypeptide: Apolipoprotein(a) (1420 aa).

The segment covering 19-30 (TAVAPPNVTPVP) has biased composition (low complexity). The disordered stretch occupies residues 19-46 (TAVAPPNVTPVPSLEAPSEQAPTEQRPG). 5 consecutive Kringle domains span residues 49-127 (ECYH…LTQC), 163-241 (ECYH…LTQC), 277-355 (ECYH…LTQC), 391-469 (ECYH…LTRC), and 505-583 (ECYY…LTQC). Intrachain disulfides connect C50/C127, C71/C110, C99/C122, C164/C241, C185/C224, C213/C236, C278/C355, C299/C338, C327/C350, C392/C469, C413/C452, C441/C464, C506/C583, C527/C566, and C555/C578. A disordered region spans residues 598 to 617 (PDPSTQASSEEAPTEQSPEV). The span at 600 to 616 (PSTQASSEEAPTEQSPE) shows a compositional bias: polar residues. Kringle domains lie at 619–697 (DCYH…LTQC), 725–803 (DCYH…LTQC), 839–917 (DCYQ…LTQC), 953–1031 (DCYH…LTQC), and 1067–1145 (QCYH…LTRC). Intrachain disulfides connect C620–C697, C641–C680, C669–C692, C726–C803, C747–C786, C775–C798, C840–C917, C861–C900, C889–C912, C954–C1031, C975–C1014, C1003–C1026, C1068–C1145, C1089–C1128, C1117–C1140, C1217–C1233, C1309–C1376, C1339–C1355, and C1366–C1394. Positions 1191-1418 (IVGGCVAHPH…FVTWIEGVMR (228 aa)) constitute a Peptidase S1 domain.

The protein belongs to the peptidase S1 family. Plasminogen subfamily. As to quaternary structure, disulfide-linked to apo-B100. Binds to fibronectin and decorin. In terms of processing, N- and O-glycosylated.

In terms of biological role, apo(a) is the main constituent of lipoprotein(a) (Lp(a)). It has serine proteinase activity and is able of autoproteolysis. Inhibits tissue-type plasminogen activator 1. Lp(a) may be a ligand for megalin/Gp 330. The chain is Apolipoprotein(a) (LPA) from Macaca mulatta (Rhesus macaque).